Reading from the N-terminus, the 239-residue chain is Phosphoribosylaminoimidazole-succinocarboxamide synthase (239 aa).

The protein belongs to the SAICAR synthetase family.

It catalyses the reaction 5-amino-1-(5-phospho-D-ribosyl)imidazole-4-carboxylate + L-aspartate + ATP = (2S)-2-[5-amino-1-(5-phospho-beta-D-ribosyl)imidazole-4-carboxamido]succinate + ADP + phosphate + 2 H(+). It participates in purine metabolism; IMP biosynthesis via de novo pathway; 5-amino-1-(5-phospho-D-ribosyl)imidazole-4-carboxamide from 5-amino-1-(5-phospho-D-ribosyl)imidazole-4-carboxylate: step 1/2. The protein is Phosphoribosylaminoimidazole-succinocarboxamide synthase of Chlorobium luteolum (strain DSM 273 / BCRC 81028 / 2530) (Pelodictyon luteolum).